The chain runs to 350 residues: Tetraacyldisaccharide 4'-kinase (350 aa).

ATP is bound at residue 48–55 (SAGGTGKT).

The protein belongs to the LpxK family.

The enzyme catalyses a lipid A disaccharide + ATP = a lipid IVA + ADP + H(+). It participates in glycolipid biosynthesis; lipid IV(A) biosynthesis; lipid IV(A) from (3R)-3-hydroxytetradecanoyl-[acyl-carrier-protein] and UDP-N-acetyl-alpha-D-glucosamine: step 6/6. Functionally, transfers the gamma-phosphate of ATP to the 4'-position of a tetraacyldisaccharide 1-phosphate intermediate (termed DS-1-P) to form tetraacyldisaccharide 1,4'-bis-phosphate (lipid IVA). This is Tetraacyldisaccharide 4'-kinase from Chlorobium limicola (strain DSM 245 / NBRC 103803 / 6330).